A 481-amino-acid polypeptide reads, in one-letter code: Endonuclease Bax1 (481 aa).

Residues 1-136 (MLPWELARFS…EKKIIKAPTI (136 aa)) form an N-terminal domain (NTD) region. The central domain (CRD) stretch occupies residues 158 to 250 (YKLTVYVSSN…LKLANFKELK (93 aa)). Residues 260–364 (DSSVEEKFYK…YKRKIDISLV (105 aa)) are nuclease domain (NUS). The a divalent metal cation site is built by Glu-265, Asp-297, and Glu-310. The C-terminal domain (CTD) stretch occupies residues 414-481 (PGYIFLKNYY…AIVIKDKKVN (68 aa)).

It belongs to the Bax1 family. In terms of assembly, homodimer in solution, forms a heterodimer with XPB2. A divalent metal cation is required as a cofactor.

Its function is as follows. A dual DNA endonuclease probably involved in nucleotide excision repair (NER). The N-terminal nuclease domain (NTD) of the XPB2-Bax1 complex cleaves on one side of a DNA bubble (which presumably mimics DNA damage), while the NUS nuclease domain cleaves the other side, respectively called 5' and 3' nuclease activities. Interaction with XPB blocks the NTD nuclease activity. Binds to and stimulates the ATPase activity (and probably also helicase activity) of XPB2. Increases affinity of XPB2 for forked DNA. Does not stimulate the DNA-dependent activity of XPB1. In an XPB2-Bax1-bubble DNA crystal (12 bp of dsDNA, a 6 base bubble and 6 bp of dsDNA) the short 6 bp arm is unwound. The 2 helicase and the ThM domains of XPB2 with the NTD and CRD domains of Bax1 encircle the DNA, forming a tunnel where the 12 bp dsDNA and the ds-ssDNA junction are located. The ThM domain is wedged between the ssDNA tails, with the 5' ssDNA contacting Bax1 and the 3' ssDNA in a channel in XPB2. The nuclease domain (NUS) of Bax1 does not contact DNA in the bubble DNA complex. The sequence is that of Endonuclease Bax1 from Sulfurisphaera tokodaii (strain DSM 16993 / JCM 10545 / NBRC 100140 / 7) (Sulfolobus tokodaii).